Reading from the N-terminus, the 198-residue chain is Recombination protein RecR (198 aa).

The C4-type zinc-finger motif lies at 58-73 (CSVCGNYTDTDPCAIC). The region spanning 81–175 (SLVCVVEEPK…KVTRIAHGIP (95 aa)) is the Toprim domain.

This sequence belongs to the RecR family.

May play a role in DNA repair. It seems to be involved in an RecBC-independent recombinational process of DNA repair. It may act with RecF and RecO. In Clostridium acetobutylicum (strain ATCC 824 / DSM 792 / JCM 1419 / IAM 19013 / LMG 5710 / NBRC 13948 / NRRL B-527 / VKM B-1787 / 2291 / W), this protein is Recombination protein RecR.